Consider the following 259-residue polypeptide: Protein odd-skipped-related 1 (259 aa).

3 C2H2-type zinc fingers span residues 168–190, 196–218, and 224–246; these read FVCKFCGRHFTKSYNLLIHERTH, YTCDICHKAFRRQDHLRDHRYIH, and FKCQECGKGFCQSRTLAVHKTLH.

This sequence belongs to the Odd C2H2-type zinc-finger protein family.

The protein resides in the nucleus. Transcriptional repressor. Required for pronephric kidney development. The protein is Protein odd-skipped-related 1 of Xenopus tropicalis (Western clawed frog).